We begin with the raw amino-acid sequence, 1669 residues long: Dystrophin, isoform B (1669 aa).

Pro residues predominate over residues 1-11 (MTAKPPPPIPP). Disordered stretches follow at residues 1-28 (MTAKPPPPIPPTLGGDDSGTHGPKLAPE), 43-243 (RGQQ…SEDA), 327-356 (RAQAQQQSLLNNSSSSSSNSQVEQSMRSTI), 389-417 (GGGGGNSSTGNAVANSGTSGSQQPPMPLS), and 481-508 (SGALSREELRMRRRSSHDETQLTQNSSG). Residues 53 to 62 (SQEQHATNTL) show a composition bias toward polar residues. Residues 118 to 131 (GLPPTMRQPPPLPR) show a composition bias toward pro residues. Over residues 132–147 (KPASTQSSAQNSAQSS) the composition is skewed to low complexity. The segment covering 153-166 (KFKDKPPPPPEKHS) has biased composition (basic and acidic residues). Composition is skewed to low complexity over residues 328 to 347 (AQAQQQSLLNNSSSSSSNSQ) and 396 to 405 (STGNAVANSG). The segment covering 485–500 (SREELRMRRRSSHDET) has biased composition (basic and acidic residues). Spectrin repeat units follow at residues 541 to 643 (QRFE…KQLH), 650 to 747 (QSFD…NRLE), 754 to 883 (NALL…HRLD), and 890 to 990 (RQFQ…KVLC). The disordered stretch occupies residues 827 to 851 (VSDTSDTEANHDSDSRYMSAEEQSR). A disordered region spans residues 994 to 1024 (AQQTHENGDDGRTTSNSGTIGPLPNLGQSVK). The region spanning 1021–1054 (QSVKPPWERATTAANVPYYIDHERETTHWDHPEM) is the WW domain. A ZZ-type zinc finger spans residues 1279 to 1335 (KHQAKCNICKEYPIVGFRYRCLKCFNFDMCQKCFFFGRNAKNHKLTHPMHEYCTTTT). The Zn(2+) site is built by cysteine 1284, cysteine 1287, cysteine 1299, cysteine 1302, cysteine 1308, cysteine 1311, histidine 1321, and histidine 1325. Position 1379 is a phosphoserine (serine 1379). Disordered stretches follow at residues 1488–1516 (EQSGMPEDSNGMQHSSSSMTGLSGQGEQG) and 1559–1669 (DEPN…ELQK). Composition is skewed to polar residues over residues 1497-1509 (NGMQHSSSSMTGL) and 1580-1611 (ALNSKPNTLQTRSVTASQLNTDSPAKMNQQNG). A compositionally biased stretch (acidic residues) spans 1630–1641 (QELESINDDLED). The span at 1642–1660 (SSSSNTTNTTTTTTTTATT) shows a compositional bias: low complexity.

Component of the dystrophin associated protein complex (DAPC). Interacts with Dg, via the Dg WW domain binding sites. In terms of tissue distribution, expressed in neuronally derived tissues, mainly the CNS and the brain of stage 16 embryos. Lower level expression is seen in the sensory organs. Expression is absent from the musculature. In larvae, expression is predominant throughout the neuropil and brain and in the eye antennal disks.

Its subcellular location is the cell membrane. The protein localises to the sarcolemma. It is found in the cytoplasm. It localises to the cytoskeleton. Required for the maintenance of appropriate synaptic retrograde communication and the stabilization of muscle cell architecture or physiology. May play a role in anchoring the cytoskeleton to the plasma membrane. This chain is Dystrophin, isoform B (Dys), found in Drosophila melanogaster (Fruit fly).